A 660-amino-acid chain; its full sequence is T-box protein H15 (660 aa).

Residues 1–11 (MLLSNQPANTK) are compositionally biased toward polar residues. Disordered regions lie at residues 1–72 (MLLS…NHNQ), 90–122 (GGNAPSSREPSERSLSPASVERYSGQDADDDVD), and 169–266 (QQQQ…PKIV). Low complexity predominate over residues 12–22 (PQQTPSPSQTQ). A compositionally biased stretch (polar residues) spans 23-33 (NFKSKLQQQIV). Residues 35 to 47 (AAAAAAANIANGS) are compositionally biased toward low complexity. Positions 48-71 (SHHHHHQNHHHHHPLNNHHNHNHN) are enriched in basic residues. Composition is skewed to low complexity over residues 93–108 (APSSREPSERSLSPAS) and 169–179 (QQQQQQQQQRQ). Positions 180–198 (QTHHHATTGKQQRQHHNHH) are enriched in basic residues. Low complexity predominate over residues 199–233 (SSNTNNSSNSGNSNTNSKSSSQRGRSAAAVGAAAT). Over residues 234–243 (PSPPPPPPSQ) the composition is skewed to pro residues. Positions 286-472 (LWDKFHELGT…SNPFAKGFRD (187 aa)) form a DNA-binding region, T-box. Residues 598 to 660 (NRTPPPSMAV…PPASNRAESP (63 aa)) form a disordered region. Residues 600–613 (TPPPSMAVAPPAPA) show a composition bias toward pro residues. Residues 614–624 (TPTSSCGSASP) are compositionally biased toward low complexity. The segment covering 643 to 660 (QVPQHQASPPASNRAESP) has biased composition (polar residues).

It localises to the nucleus. This is T-box protein H15 (H15) from Drosophila melanogaster (Fruit fly).